A 673-amino-acid polypeptide reads, in one-letter code: Armadillo repeat-containing protein 8 (673 aa).

Alanine 2 is modified (N-acetylalanine). ARM repeat units follow at residues 51–92 (NKQK…SLAM), 95–134 (ENNV…TIFT), 138–176 (TPEE…HCCK), 178–217 (PDHQ…VLAF), 224–265 (MTLV…YMCR), 269–309 (IRTD…YLIE), 313–352 (ELQR…HDLK), 374–413 (DIRK…SLSR), 416–455 (QQLR…NLLL), 458–497 (SPSK…NMAF), 501–540 (QKIK…NLLS), 543–585 (PHID…NIAD), 588–627 (TAKE…NLTW), and 634–673 (QERQ…QYLA). At serine 337 the chain carries Phosphoserine. Phosphoserine is present on serine 512.

Identified in the CTLH complex that contains GID4, RANBP9 and/or RANBP10, MKLN1, MAEA, RMND5A (or alternatively its paralog RMND5B), GID8, ARMC8, WDR26 and YPEL5. Within this complex, MAEA, RMND5A (or alternatively its paralog RMND5B), GID8, WDR26, and RANBP9 and/or RANBP10 form the catalytic core, while GID4, MKLN1, ARMC8 and YPEL5 have ancillary roles.

The protein localises to the nucleus. It localises to the cytoplasm. Its function is as follows. Component of the CTLH E3 ubiquitin-protein ligase complex that selectively accepts ubiquitin from UBE2H and mediates ubiquitination and subsequent proteasomal degradation of the transcription factor HBP1. This chain is Armadillo repeat-containing protein 8 (Armc8), found in Mus musculus (Mouse).